The primary structure comprises 233 residues: Delta-actitoxin-Amc1a (233 aa).

The signal sequence occupies residues 1 to 18 (MKRIFIVALLFATCLVNA). Propeptides lie at residues 19–29 (KPSINDADIKR) and 30–33 (EPEP). Residue P39 is modified to Hydroxyproline. 2 cysteine pairs are disulfide-bonded: C40–C51 and C43–C58. 2 consecutive propeptides follow at residues 61–63 (RKR) and 64–67 (EPEP). At P73 the chain carries Hydroxyproline. 2 disulfide bridges follow: C74-C85 and C77-C92. 2 propeptides span residues 95–97 (RKR) and 98–101 (EPEP). P107 is modified (hydroxyproline). 2 disulfides stabilise this stretch: C108/C119 and C111/C126. 2 propeptides span residues 129-131 (RKR) and 132-135 (EPEP). The residue at position 141 (P141) is a Hydroxyproline. 2 disulfide bridges follow: C142/C153 and C145/C160. Propeptides lie at residues 163 to 165 (RKR) and 166 to 169 (EPEP). P175 carries the post-translational modification Hydroxyproline. Disulfide bonds link C176-C187 and C179-C194. Propeptides lie at residues 197–199 (RKR) and 200–203 (EPEP). P209 bears the Hydroxyproline mark. Disulfide bonds link C210-C221 and C213-C228. A propeptide spanning residues 231 to 233 (RKR) is cleaved from the precursor.

Belongs to the sea anemone BBH family. In terms of processing, each Am I peptide may contain 2 disulfide bonds. Post-translationally, the precursor protein seems to be processed in the following sequence: release of the signal peptide and of the propeptide, production of six identical 34-residue peptides by cleavage between Arg and Glu, release of four N-terminal and three C-terminal residues from each peptide and hydroxylation of each Pro in position 6 of the resulting 27-residue peptides.

It localises to the secreted. The protein localises to the nematocyst. Its function is as follows. May inhibit voltage-gated sodium channels (Nav). The chain is Delta-actitoxin-Amc1a from Antheopsis maculata (Sea anemone).